Reading from the N-terminus, the 615-residue chain is Chaperone protein HtpG (615 aa).

The a; substrate-binding stretch occupies residues M1–R335. Residues E336–R541 are b. The tract at residues M542–V615 is c.

It belongs to the heat shock protein 90 family. In terms of assembly, homodimer.

The protein resides in the cytoplasm. In terms of biological role, molecular chaperone. Has ATPase activity. The sequence is that of Chaperone protein HtpG from Alcanivorax borkumensis (strain ATCC 700651 / DSM 11573 / NCIMB 13689 / SK2).